Consider the following 238-residue polypeptide: Beta-glucanase (238 aa).

The signal sequence occupies residues 1 to 26 (MMKKKSWFTLMITGVISLFFSVSAFA). The region spanning 29–238 (VFWEPLSYFN…EYDWVKYTSN (210 aa)) is the GH16 domain. Cysteines 56 and 85 form a disulfide. Catalysis depends on Glu129, which acts as the Nucleophile. Glu133 serves as the catalytic Proton donor.

Belongs to the glycosyl hydrolase 16 family.

It catalyses the reaction Hydrolysis of (1-&gt;4)-beta-D-glucosidic linkages in beta-D-glucans containing (1-&gt;3)- and (1-&gt;4)-bonds.. In Paenibacillus polymyxa (Bacillus polymyxa), this protein is Beta-glucanase (gluB).